Here is a 449-residue protein sequence, read N- to C-terminus: Ribosomal protein uS12 methylthiotransferase RimO (449 aa).

In terms of domain architecture, MTTase N-terminal spans 5–116 (PTIAISHLGC…IVDVVQRVEN (112 aa)). [4Fe-4S] cluster-binding residues include C14, C50, C79, C154, C158, and C161. In terms of domain architecture, Radical SAM core spans 140–369 (TTTEGVAYLR…MEVQQPISIK (230 aa)). Residues 372-438 (QNCIGQTVPV…VYDLYGKTNL (67 aa)) form the TRAM domain.

This sequence belongs to the methylthiotransferase family. RimO subfamily. The cofactor is [4Fe-4S] cluster.

The protein resides in the cytoplasm. It catalyses the reaction L-aspartate(89)-[ribosomal protein uS12]-hydrogen + (sulfur carrier)-SH + AH2 + 2 S-adenosyl-L-methionine = 3-methylsulfanyl-L-aspartate(89)-[ribosomal protein uS12]-hydrogen + (sulfur carrier)-H + 5'-deoxyadenosine + L-methionine + A + S-adenosyl-L-homocysteine + 2 H(+). Catalyzes the methylthiolation of an aspartic acid residue of ribosomal protein uS12. This is Ribosomal protein uS12 methylthiotransferase RimO from Rippkaea orientalis (strain PCC 8801 / RF-1) (Cyanothece sp. (strain PCC 8801)).